A 1174-amino-acid polypeptide reads, in one-letter code: Creatine kinase, flagellar (1174 aa).

The segment covering 1–14 (MGCAASSQQTTATG) has biased composition (polar residues). The tract at residues 1-62 (MGCAASSQQT…PFVEPDPNYP (62 aa)) is disordered. Over residues 18-39 (AAGEKANPAPANNNPNAANKAE) the composition is skewed to low complexity. Residues 53-139 (PFVEPDPNYP…FDPTIDKRHN (87 aa)) enclose the Phosphagen kinase N-terminal 1 domain. The stretch at 61-414 (YPDLSKHNNY…EKALEKGSDI (354 aa)) is one 1; approximate repeat. The Phosphagen kinase C-terminal 1 domain occupies 166–408 (YVLSCRVRTG…KKLIELEKAL (243 aa)). ATP is bound by residues 169–173 (SCRVR), His-232, Arg-277, and 333–337 (RAGVH). Residues 426-512 (RAEQVKEGYP…FDPVIDARHG (87 aa)) enclose the Phosphagen kinase N-terminal 2 domain. The stretch at 434-787 (YPDLSKHNNH…EKKLEKGEDI (354 aa)) is one 2; approximate repeat. Positions 539 to 781 (YVLSCRVRTG…ELLVQMEKKL (243 aa)) constitute a Phosphagen kinase C-terminal 2 domain. Residues 542–546 (SCRVR), His-605, Arg-706, 734–739 (RGTGGV), and Asp-749 contribute to the ATP site. In terms of domain architecture, Phosphagen kinase N-terminal 3 spans 800-886 (PIKPFSYDYP…FDPVISARHG (87 aa)). One copy of the 3; approximate repeat lies at 808–1161 (YPDFSLHNNW…EKALMKGEDI (354 aa)). One can recognise a Phosphagen kinase C-terminal 3 domain in the interval 913 to 1155 (FVLSCRVRTG…KLLVNLEKAL (243 aa)).

The protein belongs to the ATP:guanido phosphotransferase family. In terms of assembly, monomer.

Its subcellular location is the cytoplasm. It is found in the cytoskeleton. The protein localises to the flagellum axoneme. The catalysed reaction is creatine + ATP = N-phosphocreatine + ADP + H(+). This axonemal protein participates in an energy shuttle that utilizes phosphocreatine to transfer the energy from ATP generated by the mitochondrion in the sperm head to dynein in the distal portions of the flagellum. This chain is Creatine kinase, flagellar, found in Strongylocentrotus purpuratus (Purple sea urchin).